The primary structure comprises 182 residues: NADH-quinone oxidoreductase subunit B (182 aa).

[4Fe-4S] cluster-binding residues include cysteine 46, cysteine 47, cysteine 112, and cysteine 141.

Belongs to the complex I 20 kDa subunit family. In terms of assembly, NDH-1 is composed of 14 different subunits. Subunits NuoB, C, D, E, F, and G constitute the peripheral sector of the complex. [4Fe-4S] cluster is required as a cofactor.

It localises to the cell inner membrane. The catalysed reaction is a quinone + NADH + 5 H(+)(in) = a quinol + NAD(+) + 4 H(+)(out). Its function is as follows. NDH-1 shuttles electrons from NADH, via FMN and iron-sulfur (Fe-S) centers, to quinones in the respiratory chain. The immediate electron acceptor for the enzyme in this species is believed to be a menaquinone. Couples the redox reaction to proton translocation (for every two electrons transferred, four hydrogen ions are translocated across the cytoplasmic membrane), and thus conserves the redox energy in a proton gradient. The sequence is that of NADH-quinone oxidoreductase subunit B from Flavobacterium johnsoniae (strain ATCC 17061 / DSM 2064 / JCM 8514 / BCRC 14874 / CCUG 350202 / NBRC 14942 / NCIMB 11054 / UW101) (Cytophaga johnsonae).